We begin with the raw amino-acid sequence, 179 residues long: Cytochrome b6-f complex iron-sulfur subunit 1 (179 aa).

A helical transmembrane segment spans residues 21-43 (LLTFGTVTGVALGALYPVVNYFI). The Rieske domain occupies 61–162 (GNDVSVSKFL…AKTENDKIVL (102 aa)). Residues C108, H110, C126, and H129 each contribute to the [2Fe-2S] cluster site. A disulfide bond links C113 and C128.

This sequence belongs to the Rieske iron-sulfur protein family. The 4 large subunits of the cytochrome b6-f complex are cytochrome b6, subunit IV (17 kDa polypeptide, PetD), cytochrome f and the Rieske protein, while the 4 small subunits are PetG, PetL, PetM and PetN. The complex functions as a dimer. [2Fe-2S] cluster is required as a cofactor.

Its subcellular location is the cellular thylakoid membrane. It carries out the reaction 2 oxidized [plastocyanin] + a plastoquinol + 2 H(+)(in) = 2 reduced [plastocyanin] + a plastoquinone + 4 H(+)(out). Its function is as follows. Component of the cytochrome b6-f complex, which mediates electron transfer between photosystem II (PSII) and photosystem I (PSI), cyclic electron flow around PSI, and state transitions. This is Cytochrome b6-f complex iron-sulfur subunit 1 from Trichormus variabilis (strain ATCC 29413 / PCC 7937) (Anabaena variabilis).